A 69-amino-acid chain; its full sequence is Large ribosomal subunit protein eL38 (69 aa).

It belongs to the eukaryotic ribosomal protein eL38 family.

The polypeptide is Large ribosomal subunit protein eL38 (RPL38) (Solanum lycopersicum (Tomato)).